Here is a 144-residue protein sequence, read N- to C-terminus: Small polypeptide DEVIL 15 (144 aa).

Residue Asn-8 is glycosylated (N-linked (GlcNAc...) asparagine). The segment at 22 to 63 (SSSSKPFFTRSFSTKTSSSPSSKSHFTRSFSTKPSSSSSSSD) is disordered. The helical transmembrane segment at 104-120 (ILSKKGASVTGKCFKVA) threads the bilayer. The segment at 111–142 (SVTGKCFKVAKEHKSRFYIIKRCVLMLVCWHK) is required for DVL/RTFL small polypeptide activity.

Belongs to the DVL/RTFL small polypeptides family.

The protein resides in the cell membrane. Small polypeptide acting as a regulatory molecule which coordinates cellular responses required for differentiation, growth and development, probably by restricting polar cell proliferation in lateral organs and coordinating socket cell recruitment and differentiation at trichome sites. In Arabidopsis thaliana (Mouse-ear cress), this protein is Small polypeptide DEVIL 15.